Consider the following 739-residue polypeptide: Potassium transporter 26 (739 aa).

Topologically, residues 1 to 81 (MEYHHRPHSP…RQVALLSFQS (81 aa)) are cytoplasmic. The helical transmembrane segment at 82-102 (LGVVYGDLGTSPLYVFSSISL) threads the bilayer. Residues 103–112 (DDPGEADFVG) lie on the Extracellular side of the membrane. A helical membrane pass occupies residues 113-133 (ILSIILWTFTMICLVKYVFIV). Topologically, residues 134 to 198 (LKADDHGEGG…KFLEQSTKWQ (65 aa)) are cytoplasmic. The chain crosses the membrane as a helical span at residues 199–219 (AVITYIVLAGTCMVLGDGALT). Residues 220–236 (PAISVLSAVQGIQSRSS) lie on the Extracellular side of the membrane. The chain crosses the membrane as a helical span at residues 237 to 257 (SITQAHVVLLSVIILFILFFF). The Cytoplasmic segment spans residues 258-268 (QKHGTSKVSFT). Residues 269–289 (FSPIMILWFTFVAFIGLYNII) form a helical membrane-spanning segment. At 290–318 (KHYPPILKAVSPHYIIIYFIRNKRAAWET) the chain is on the extracellular side. A helical membrane pass occupies residues 319 to 339 (LGAIVLCITGAEAMFADLGHF). Over 340-347 (NKSSIQMA) the chain is Cytoplasmic. Residues 348–368 (FSVIVYPSMILAYAGQAAFLV) traverse the membrane as a helical segment. At 369 to 385 (KNPSKLSTTFYSSTPEP) the chain is on the extracellular side. A helical membrane pass occupies residues 386-406 (LFWPMFIIATLAAIVASQALI). Residues 407-437 (SASFSIIRQSIALGCFPRVTMKHTSGKHEGQ) are Cytoplasmic-facing. A helical transmembrane segment spans residues 438 to 458 (VYSPEINYFLMVACILITVGF). Residues 459-469 (KGGPEIGQAFG) lie on the Extracellular side of the membrane. A helical membrane pass occupies residues 470 to 490 (VAVIFVMLFTTNLMTVVMLII). The Cytoplasmic segment spans residues 491–494 (WESN). Residues 495 to 515 (IALASLFFVFFFSIEGIYMTS) form a helical membrane-spanning segment. Residues 516–519 (LMNK) lie on the Extracellular side of the membrane. A helical membrane pass occupies residues 520 to 540 (ILQGGWVPFAITAFFLIITLS). Topologically, residues 541–739 (WTYGRSKKGE…TLQVGMLYEI (199 aa)) are cytoplasmic.

It belongs to the HAK/KUP transporter (TC 2.A.72.3) family.

Its subcellular location is the membrane. Functionally, high-affinity potassium transporter. This Oryza sativa subsp. japonica (Rice) protein is Potassium transporter 26 (HAK26).